The chain runs to 147 residues: Receptor activity-modifying protein 3 (147 aa).

An N-terminal signal peptide occupies residues 1 to 22; sequence MKTPAQRLHLLPLLLLLCGECA. Residues 23-112 lie on the Extracellular side of the membrane; sequence QVCGCNETGM…CTVDRTHWED (90 aa). 4 N-linked (GlcNAc...) asparagine glycosylation sites follow: N28, N57, N70, and N102. 2 disulfide bridges follow: C39/C71 and C56/C103. A helical membrane pass occupies residues 113-137; it reads PPDEVLIPLIAVPVVLTVAMAGLVV. Over 138–147 the chain is Cytoplasmic; sequence WRSKHTDRLL.

The protein belongs to the RAMP family. As to quaternary structure, heterodimer of CALCRL and RAMP3; interaction induces allosteric modulation of CALCRL function and ligand specificity for adrenomedullin/ADM and intermedin/ADM2. Heterodimer of CALCR and RAMP3; interaction form the receptor complex AMYR3 for amylin/IAPP. Interacts with GPER1. As to expression, expressed predominantly in the testis, embryonic and adult brain and in kidney.

It localises to the cell membrane. It is found in the membrane. Accessory protein that interacts with and modulates the function of G-protein coupled receptors including calcitonin gene-related peptide type 1 receptor (CALCRL), calcitonin receptor (CALCR) and G-protein coupled estrogen receptor 1 (GPER1). Required for the transport of CALCRL and GPER1 receptors to the plasma membrane. Plays a role in cardioprotection by reducing cardiac hypertrophy and perivascular fibrosis in a GPER1-dependent manner. Together with CALCRL, form a receptor complex for adrenomedullin/ADM and intermedin/ADM2. Together with CALCR, act as a receptor complex for amylin/IAPP. The protein is Receptor activity-modifying protein 3 of Mus musculus (Mouse).